The sequence spans 117 residues: Large ribosomal subunit protein bL20 (117 aa).

This sequence belongs to the bacterial ribosomal protein bL20 family.

Functionally, binds directly to 23S ribosomal RNA and is necessary for the in vitro assembly process of the 50S ribosomal subunit. It is not involved in the protein synthesizing functions of that subunit. The protein is Large ribosomal subunit protein bL20 of Mannheimia succiniciproducens (strain KCTC 0769BP / MBEL55E).